The sequence spans 138 residues: Large ribosomal subunit protein uL16 (138 aa).

A compositionally biased stretch (basic residues) spans 1–13 (MLQPSRRKFRKEQ). The segment at 1 to 22 (MLQPSRRKFRKEQKGRNTGIAT) is disordered.

The protein belongs to the universal ribosomal protein uL16 family. In terms of assembly, part of the 50S ribosomal subunit.

Functionally, binds 23S rRNA and is also seen to make contacts with the A and possibly P site tRNAs. This Methylibium petroleiphilum (strain ATCC BAA-1232 / LMG 22953 / PM1) protein is Large ribosomal subunit protein uL16.